The following is a 219-amino-acid chain: NAD(P)H-quinone oxidoreductase subunit I (219 aa).

4Fe-4S ferredoxin-type domains lie at 55 to 84 and 95 to 124; these read GRIH…VDWV and RNYS…MTEE. Residues Cys64, Cys67, Cys70, Cys74, Cys104, Cys107, Cys110, and Cys114 each coordinate [4Fe-4S] cluster.

This sequence belongs to the complex I 23 kDa subunit family. NDH-1 is composed of at least 11 different subunits. Requires [4Fe-4S] cluster as cofactor.

Its subcellular location is the cellular thylakoid membrane. The catalysed reaction is a plastoquinone + NADH + (n+1) H(+)(in) = a plastoquinol + NAD(+) + n H(+)(out). It carries out the reaction a plastoquinone + NADPH + (n+1) H(+)(in) = a plastoquinol + NADP(+) + n H(+)(out). Functionally, NDH-1 shuttles electrons from an unknown electron donor, via FMN and iron-sulfur (Fe-S) centers, to quinones in the respiratory and/or the photosynthetic chain. The immediate electron acceptor for the enzyme in this species is believed to be plastoquinone. Couples the redox reaction to proton translocation, and thus conserves the redox energy in a proton gradient. The protein is NAD(P)H-quinone oxidoreductase subunit I of Prochlorococcus marinus (strain SARG / CCMP1375 / SS120).